Consider the following 85-residue polypeptide: MSSGGLLLLLGLLTLCAELTPVSSRQRHRDCDKPPDKGNCGSVRRAFYYDTRLKTCKAFPYRGCNGNGNHFKTETLCRCECLVYP.

The N-terminal stretch at 1-24 is a signal peptide; sequence MSSGGLLLLLGLLTLCAELTPVSS. The region spanning 31–81 is the BPTI/Kunitz inhibitor domain; it reads CDKPPDKGNCGSVRRAFYYDTRLKTCKAFPYRGCNGNGNHFKTETLCRCEC. Cystine bridges form between C31–C81, C40–C64, and C56–C77.

This sequence belongs to the venom Kunitz-type family. As to quaternary structure, heterodimer; disulfide-linked. The A chain has phospholipase A2 activity and the B chain shows homology with the basic protease inhibitors. As to expression, expressed by the venom gland.

The protein localises to the secreted. Beta-bungarotoxin is a presynaptic neurotoxin of the venom. The B chain is homologous to venom basic protease inhibitors but has no protease inhibitor activity and is non-toxic. This Bungarus candidus (Malayan krait) protein is Kunitz-type serine protease inhibitor homolog beta-bungarotoxin B1 chain.